Here is a 1146-residue protein sequence, read N- to C-terminus: Elicitor of plant defense protein 1 (1146 aa).

Disordered stretches follow at residues 25–75 (DPLP…RLSN) and 156–226 (ARPP…PRQG). The segment covering 164-177 (RAERIKAEDSDQSG) has biased composition (basic and acidic residues). The region spanning 246–500 (PLNTDPNMHP…NLCTEAFSPL (255 aa)) is the uDENN domain. One can recognise a cDENN domain in the interval 522–656 (VNEIPGSRTI…HRRKLHALLQ (135 aa)). One can recognise a dDENN domain in the interval 658–1016 (AAPAKLRYGV…ERETKPGTTA (359 aa)). The disordered stretch occupies residues 730 to 806 (LHSKVDPNKP…RRSSSFGVDK (77 aa)). Over residues 732-743 (SKVDPNKPDRPG) the composition is skewed to basic and acidic residues. Residues 744–760 (TSKSTRTSPPSSVSPVS) show a composition bias toward low complexity. Residues 769–783 (TPVSRSDSGFALTST) are compositionally biased toward polar residues. Basic and acidic residues predominate over residues 784-797 (LREKRSRNFDEKTR). Residues 883-931 (GHCFNWEEGALSSSCSVCDDRAEGDGIYKCSGCSAFAHGRCLGCVSLAC) form a Phorbol-ester/DAG-type zinc finger. A disordered region spans residues 1121–1146 (PRPEQRGTRGLVRKQVPSMLGTSPTN).

Belongs to the EPD1 elicitor family. Interacts with host cotton EIR5A (AC A0A5J5T2N2) and EIR5D (AC A0A5J5NT52) and host N.benthamiana EIR (AC P0DXJ0).

The protein resides in the secreted. Its subcellular location is the host cell. In terms of biological role, acts as an elicitor that triggers defense responses in both Nicotiana benthamiana and cotton plants. Triggers the accumulation of reactive oxygen species (ROS) and the activation of cell death in cotton plants. Induces significantly enhanced resistance of Nicotiana benthamiana to both the broad-host-range filamentous pathogen Botrytis cinerea and the semibiotrophic pathogen Phytophthora capsici. Stimulates the expression of EIR5A (AC A0A5J5T2N2) and EIR5D (AC A0A5J5NT52) in cotton plants and recognition of EPD1 potentiates EIRs to enhance cotton PAMP-triggered immunity (PTI). This is Elicitor of plant defense protein 1 from Verticillium dahliae (strain VdLs.17 / ATCC MYA-4575 / FGSC 10137) (Verticillium wilt).